The following is a 260-amino-acid chain: 3-methyl-2-oxobutanoate hydroxymethyltransferase (260 aa).

2 residues coordinate Mg(2+): Asp-44 and Asp-83. 3-methyl-2-oxobutanoate contacts are provided by residues 44 to 45 (DS), Asp-83, and Lys-113. Residue Glu-115 coordinates Mg(2+). The active-site Proton acceptor is Glu-183.

Belongs to the PanB family. Homodecamer; pentamer of dimers. Mg(2+) is required as a cofactor.

Its subcellular location is the cytoplasm. It carries out the reaction 3-methyl-2-oxobutanoate + (6R)-5,10-methylene-5,6,7,8-tetrahydrofolate + H2O = 2-dehydropantoate + (6S)-5,6,7,8-tetrahydrofolate. It participates in cofactor biosynthesis; (R)-pantothenate biosynthesis; (R)-pantoate from 3-methyl-2-oxobutanoate: step 1/2. Catalyzes the reversible reaction in which hydroxymethyl group from 5,10-methylenetetrahydrofolate is transferred onto alpha-ketoisovalerate to form ketopantoate. This is 3-methyl-2-oxobutanoate hydroxymethyltransferase from Gloeobacter violaceus (strain ATCC 29082 / PCC 7421).